The chain runs to 262 residues: Acetaldehyde dehydrogenase 7 (262 aa).

10–13 (SGNI) is a binding site for NAD(+). Cys-128 functions as the Acyl-thioester intermediate in the catalytic mechanism. Residue 159–167 (SAGPGTRAN) participates in NAD(+) binding.

This sequence belongs to the acetaldehyde dehydrogenase family.

It carries out the reaction acetaldehyde + NAD(+) + CoA = acetyl-CoA + NADH + H(+). This Rhodococcus jostii (strain RHA1) protein is Acetaldehyde dehydrogenase 7.